The primary structure comprises 453 residues: MERTCLAIILAAGDSTRMKSSISKVLHPIAGRPMIAHVMEAIARTDISAAALVVGRNAEEVAAAADIGGIEVEAYLQKERLGTGHAVLAAREAIARGYDDIIVAYGDVPLLTDVPLRAARKGLADGNDIVVIGFHTENPNAYGRLLVKDGELIAIREAKDATDAELAVTWCNSGLMAINGRKALDLLDRIGNSNAKGEYYLTDLVEIARSLGGRAIAVDAPEVEMTGCNNRAELAFIERLWQERRRHELMLSGVTMIAPETVFLAYDTVIGQDALIEPNVVFGPRVVIDSGAVIHAFSHIEGAHVSGTATVGPFARLRPGADLADGSKVGNFCEVKNGKIGKGAKVNHLSYIGDATIGAGSNIGAGTITCNYDGVNKHETHIGANSFIGSNSSLVAPVRIGDNAYVASGSVITEDVPADALAFGRARQEVKLGRAKVIRERALAIKAAKKGSH.

The pyrophosphorylase stretch occupies residues 1–231 (MERTCLAIIL…EVEMTGCNNR (231 aa)). Residues 10-13 (LAAG), K24, Q77, 82-83 (GT), 105-107 (YGD), G143, E157, N172, and N229 each bind UDP-N-acetyl-alpha-D-glucosamine. D107 provides a ligand contact to Mg(2+). N229 is a Mg(2+) binding site. Residues 232-252 (AELAFIERLWQERRRHELMLS) form a linker region. Residues 253-453 (GVTMIAPETV…AIKAAKKGSH (201 aa)) are N-acetyltransferase. The UDP-N-acetyl-alpha-D-glucosamine site is built by R318 and K336. The active-site Proton acceptor is H348. UDP-N-acetyl-alpha-D-glucosamine-binding residues include Y351 and N362. Acetyl-CoA is bound by residues A365, 371-372 (NY), S390, S408, and R425.

The protein in the N-terminal section; belongs to the N-acetylglucosamine-1-phosphate uridyltransferase family. In the C-terminal section; belongs to the transferase hexapeptide repeat family. Homotrimer. The cofactor is Mg(2+).

It is found in the cytoplasm. It carries out the reaction alpha-D-glucosamine 1-phosphate + acetyl-CoA = N-acetyl-alpha-D-glucosamine 1-phosphate + CoA + H(+). The catalysed reaction is N-acetyl-alpha-D-glucosamine 1-phosphate + UTP + H(+) = UDP-N-acetyl-alpha-D-glucosamine + diphosphate. The protein operates within nucleotide-sugar biosynthesis; UDP-N-acetyl-alpha-D-glucosamine biosynthesis; N-acetyl-alpha-D-glucosamine 1-phosphate from alpha-D-glucosamine 6-phosphate (route II): step 2/2. It participates in nucleotide-sugar biosynthesis; UDP-N-acetyl-alpha-D-glucosamine biosynthesis; UDP-N-acetyl-alpha-D-glucosamine from N-acetyl-alpha-D-glucosamine 1-phosphate: step 1/1. It functions in the pathway bacterial outer membrane biogenesis; LPS lipid A biosynthesis. Functionally, catalyzes the last two sequential reactions in the de novo biosynthetic pathway for UDP-N-acetylglucosamine (UDP-GlcNAc). The C-terminal domain catalyzes the transfer of acetyl group from acetyl coenzyme A to glucosamine-1-phosphate (GlcN-1-P) to produce N-acetylglucosamine-1-phosphate (GlcNAc-1-P), which is converted into UDP-GlcNAc by the transfer of uridine 5-monophosphate (from uridine 5-triphosphate), a reaction catalyzed by the N-terminal domain. In Rhizobium rhizogenes (strain K84 / ATCC BAA-868) (Agrobacterium radiobacter), this protein is Bifunctional protein GlmU.